The following is a 306-amino-acid chain: GTP cyclohydrolase FolE2 (306 aa).

The protein belongs to the GTP cyclohydrolase IV family.

It carries out the reaction GTP + H2O = 7,8-dihydroneopterin 3'-triphosphate + formate + H(+). The protein operates within cofactor biosynthesis; 7,8-dihydroneopterin triphosphate biosynthesis; 7,8-dihydroneopterin triphosphate from GTP: step 1/1. Converts GTP to 7,8-dihydroneopterin triphosphate. The polypeptide is GTP cyclohydrolase FolE2 (Pseudoalteromonas atlantica (strain T6c / ATCC BAA-1087)).